The primary structure comprises 142 residues: Endoribonuclease YbeY (142 aa).

The Zn(2+) site is built by His-107, His-111, and Asp-117.

The protein belongs to the endoribonuclease YbeY family. Requires Zn(2+) as cofactor.

The protein resides in the cytoplasm. Single strand-specific metallo-endoribonuclease involved in late-stage 70S ribosome quality control and in maturation of the 3' terminus of the 16S rRNA. This chain is Endoribonuclease YbeY, found in Parabacteroides distasonis (strain ATCC 8503 / DSM 20701 / CIP 104284 / JCM 5825 / NCTC 11152).